The following is a 215-amino-acid chain: Adenylate kinase (215 aa).

10–15 (GAGKGT) is a binding site for ATP. Residues 30–59 (STGDMLRAAVKAGTELGLKAKSVMDAGGLV) form an NMP region. AMP contacts are provided by residues threonine 31, arginine 36, 57 to 59 (GLV), 85 to 88 (GFPR), and glutamine 92. The interval 122-159 (GRRVHPASGRVYHTEYNPPKVAGKDDVSGEELVQREDD) is LID. ATP-binding positions include arginine 123 and 132-133 (VY). Positions 156 and 167 each coordinate AMP. Glycine 201 serves as a coordination point for ATP.

The protein belongs to the adenylate kinase family. Monomer.

It localises to the cytoplasm. It catalyses the reaction AMP + ATP = 2 ADP. Its pathway is purine metabolism; AMP biosynthesis via salvage pathway; AMP from ADP: step 1/1. Catalyzes the reversible transfer of the terminal phosphate group between ATP and AMP. Plays an important role in cellular energy homeostasis and in adenine nucleotide metabolism. The chain is Adenylate kinase from Ectopseudomonas mendocina (strain ymp) (Pseudomonas mendocina).